We begin with the raw amino-acid sequence, 150 residues long: Snake venom vascular endothelial growth factor toxin barietin (150 aa).

Positions 1–24 (MAAYLLAVAILFCIQGWPSGTVQG) are cleaved as a signal peptide. Pyrrolidone carboxylic acid (Glu) is present on glutamate 25. 3 disulfide bridges follow: cysteine 38–cysteine 80, cysteine 69–cysteine 115, and cysteine 73–cysteine 117. The disordered stretch occupies residues 119-150 (PRSGSRVNIGKHKRSPEEGEREPSSPLTPGSL). A propeptide spanning residues 122–150 (GSRVNIGKHKRSPEEGEREPSSPLTPGSL) is cleaved from the precursor.

The protein belongs to the PDGF/VEGF growth factor family. Snake venom VEGF subfamily. As to quaternary structure, homodimer; disulfide-linked. Interacts with high affinity with VEGF receptor-2 (KDR), and with a lower affinity with VEGF receptor-1 (FLT1). Does not bind VEGF receptor-3 (FLT4) and neuropilin-1 (NRP1). In terms of tissue distribution, expressed by the venom gland.

It localises to the secreted. In terms of biological role, snake venom VEGFs that may contribute to venom dispersion and prey subjugation by inducing vascular permeability and hypotension. This protein induces an increase in capillary permeability after intradermal injection, as well as a drastic hypotensive effect after intravenous injection. The hypotension is mediated by nitric oxide (NO), which is produced by VEGF-activated endothelium NO synthase. Also induces angiogenesis in vitro, probably through VEGF receptor (KDR/VEGFR-2) signaling. This is Snake venom vascular endothelial growth factor toxin barietin from Bitis arietans (African puff adder).